Here is a 644-residue protein sequence, read N- to C-terminus: Threonine--tRNA ligase (644 aa).

Positions 1-61 (MPVITLPDGS…EKDTKLTIIT (61 aa)) constitute a TGS domain. The interval 242–535 (DHRRIGADLD…LIEHYEGKFP (294 aa)) is catalytic. Positions 335, 386, and 512 each coordinate Zn(2+).

It belongs to the class-II aminoacyl-tRNA synthetase family. Homodimer. Requires Zn(2+) as cofactor.

It localises to the cytoplasm. The enzyme catalyses tRNA(Thr) + L-threonine + ATP = L-threonyl-tRNA(Thr) + AMP + diphosphate + H(+). Its function is as follows. Catalyzes the attachment of threonine to tRNA(Thr) in a two-step reaction: L-threonine is first activated by ATP to form Thr-AMP and then transferred to the acceptor end of tRNA(Thr). Also edits incorrectly charged L-seryl-tRNA(Thr). This chain is Threonine--tRNA ligase, found in Nitrosococcus oceani (strain ATCC 19707 / BCRC 17464 / JCM 30415 / NCIMB 11848 / C-107).